The following is a 145-amino-acid chain: Superoxide dismutase [Mn/Fe] (145 aa).

Fe(3+) contacts are provided by His10 and His64. 2 residues coordinate Mn(2+): His10 and His64.

Belongs to the iron/manganese superoxide dismutase family. Mn(2+) is required as a cofactor. Fe(3+) serves as cofactor.

The enzyme catalyses 2 superoxide + 2 H(+) = H2O2 + O2. Functionally, destroys superoxide anion radicals which are normally produced within the cells and which are toxic to biological systems. Catalyzes the dismutation of superoxide anion radicals into O2 and H2O2 by successive reduction and oxidation of the transition metal ion at the active site. This chain is Superoxide dismutase [Mn/Fe] (sodA), found in Streptococcus canis.